The chain runs to 506 residues: Aldehyde dehydrogenase [NAD(P)+] 1 (506 aa).

Glu268 functions as the Proton acceptor in the catalytic mechanism. Cys302 serves as the catalytic Nucleophile.

It belongs to the aldehyde dehydrogenase family.

It is found in the cytoplasm. It carries out the reaction an aldehyde + NAD(+) + H2O = a carboxylate + NADH + 2 H(+). The enzyme catalyses 3-aminopropanal + NAD(+) + H2O = beta-alanine + NADH + 2 H(+). Its function is as follows. Cytoplasmic aldehyde dehydrogenase involved in ethanol oxidation. Required for pantothenic acid production through the conversion of 3-aminopropanal to beta-alanine, an intermediate in pantothenic acid (vitamin B5) and coenzyme A (CoA) biosynthesis. The polypeptide is Aldehyde dehydrogenase [NAD(P)+] 1 (ALD2) (Saccharomyces cerevisiae (strain ATCC 204508 / S288c) (Baker's yeast)).